A 320-amino-acid chain; its full sequence is Nucleotide-binding protein Psyc_0118 (320 aa).

Position 32–39 (32–39 (GRSGSGKT)) interacts with ATP. Residue 82 to 85 (DIRT) coordinates GTP.

This sequence belongs to the RapZ-like family.

Displays ATPase and GTPase activities. The chain is Nucleotide-binding protein Psyc_0118 from Psychrobacter arcticus (strain DSM 17307 / VKM B-2377 / 273-4).